A 394-amino-acid chain; its full sequence is Elongation factor Tu 1 (394 aa).

A tr-type G domain is found at 10 to 204 (KPHVNVGTIG…ALDSYIPEPE (195 aa)). The tract at residues 19 to 26 (GHVDHGKT) is G1. 19 to 26 (GHVDHGKT) contributes to the GTP binding site. A Mg(2+)-binding site is contributed by threonine 26. The segment at 60–64 (GITIS) is G2. Residues 81–84 (DCPG) are G3. Residues 81–85 (DCPGH) and 136–139 (NKCD) each bind GTP. The interval 136–139 (NKCD) is G4. A G5 region spans residues 174–176 (SAL).

It belongs to the TRAFAC class translation factor GTPase superfamily. Classic translation factor GTPase family. EF-Tu/EF-1A subfamily. Monomer.

It localises to the cytoplasm. It catalyses the reaction GTP + H2O = GDP + phosphate + H(+). Functionally, GTP hydrolase that promotes the GTP-dependent binding of aminoacyl-tRNA to the A-site of ribosomes during protein biosynthesis. This Vibrio vulnificus (strain YJ016) protein is Elongation factor Tu 1.